The following is a 358-amino-acid chain: Low-specificity L-threonine aldolase 1 (358 aa).

The residue at position 207 (K207) is an N6-(pyridoxal phosphate)lysine.

The protein belongs to the threonine aldolase family. The cofactor is pyridoxal 5'-phosphate. As to expression, expressed in root tips, seedlings, carpels and seeds.

It catalyses the reaction L-threonine = acetaldehyde + glycine. The catalysed reaction is L-allo-threonine = acetaldehyde + glycine. It participates in amino-acid degradation; L-threonine degradation via aldolase pathway; acetaldehyde and glycine from L-threonine: step 1/1. Threonine aldolase involved in threonine degradation to glycine. May play a role in the removal of L-allo-threonine. This chain is Low-specificity L-threonine aldolase 1, found in Arabidopsis thaliana (Mouse-ear cress).